The following is a 314-amino-acid chain: Aryldialkylphosphatase (314 aa).

Residues H22, H24, and K137 each contribute to the Fe cation site. Residues K137, H170, and H199 each coordinate Co(2+). The residue at position 137 (K137) is an N6-carboxylysine. D256 lines the Fe cation pocket.

It belongs to the metallo-dependent hydrolases superfamily. Phosphotriesterase family. As to quaternary structure, homodimer. The cofactor is Co(2+). Requires Fe cation as cofactor.

The enzyme catalyses An aryl dialkyl phosphate + H2O = dialkyl phosphate + an aryl alcohol.. Its activity is regulated as follows. Inactivated by EDTA and o-phenanthroline. Its function is as follows. Has a low paraoxonase activity. Also active, but with a lower activity, against other organo-phosphorus insecticides such as Dursban, Coumaphos, pNP-butanoate or parathion. This is Aryldialkylphosphatase (php) from Saccharolobus solfataricus (strain ATCC 35092 / DSM 1617 / JCM 11322 / P2) (Sulfolobus solfataricus).